The primary structure comprises 404 residues: Chorismate synthase (404 aa).

R40 and R46 together coordinate NADP(+). FMN contacts are provided by residues 136-138 (RAS), 257-258 (QA), G301, 316-320 (KPIST), and R342.

Belongs to the chorismate synthase family. As to quaternary structure, homotetramer. It depends on FMNH2 as a cofactor.

The catalysed reaction is 5-O-(1-carboxyvinyl)-3-phosphoshikimate = chorismate + phosphate. It functions in the pathway metabolic intermediate biosynthesis; chorismate biosynthesis; chorismate from D-erythrose 4-phosphate and phosphoenolpyruvate: step 7/7. Functionally, catalyzes the anti-1,4-elimination of the C-3 phosphate and the C-6 proR hydrogen from 5-enolpyruvylshikimate-3-phosphate (EPSP) to yield chorismate, which is the branch point compound that serves as the starting substrate for the three terminal pathways of aromatic amino acid biosynthesis. This reaction introduces a second double bond into the aromatic ring system. The chain is Chorismate synthase from Mycolicibacterium vanbaalenii (strain DSM 7251 / JCM 13017 / BCRC 16820 / KCTC 9966 / NRRL B-24157 / PYR-1) (Mycobacterium vanbaalenii).